The following is a 432-amino-acid chain: Phosphomevalonate kinase (432 aa).

Residues Lys-10 and 142-148 (VEKTGLG) each bind ATP.

The protein belongs to the GHMP kinase family. Mevalonate kinase subfamily.

The protein localises to the cytoplasm. It catalyses the reaction (R)-5-phosphomevalonate + ATP = (R)-5-diphosphomevalonate + ADP. It functions in the pathway isoprenoid biosynthesis; isopentenyl diphosphate biosynthesis via mevalonate pathway; isopentenyl diphosphate from (R)-mevalonate: step 2/3. Its function is as follows. Phosphomevalonate kinase; part of the second module of ergosterol biosynthesis pathway that includes the middle steps of the pathway. ERG8 converts 5-phosphomevalonate to 5-diphosphomevalonate. The second module is carried out in the vacuole and involves the formation of farnesyl diphosphate, which is also an important intermediate in the biosynthesis of ubiquinone, dolichol, heme and prenylated proteins. Activity by the mevalonate kinase ERG12 first converts mevalonate into 5-phosphomevalonate. 5-phosphomevalonate is then further converted to 5-diphosphomevalonate by the phosphomevalonate kinase ERG8. The diphosphomevalonate decarboxylase MVD then produces isopentenyl diphosphate. The isopentenyl-diphosphate delta-isomerase IDI1 then catalyzes the 1,3-allylic rearrangement of the homoallylic substrate isopentenyl (IPP) to its highly electrophilic allylic isomer, dimethylallyl diphosphate (DMAPP). Finally the farnesyl diphosphate synthase ERG20 catalyzes the sequential condensation of isopentenyl pyrophosphate with dimethylallyl pyrophosphate, and then with the resultant geranylpyrophosphate to the ultimate product farnesyl pyrophosphate. The protein is Phosphomevalonate kinase of Candida albicans (strain SC5314 / ATCC MYA-2876) (Yeast).